We begin with the raw amino-acid sequence, 188 residues long: dCTP deaminase (188 aa).

DCTP contacts are provided by residues 111–116 (KSTYAR), 135–137 (TLE), Q156, Y170, and Q180. E137 functions as the Proton donor/acceptor in the catalytic mechanism.

The protein belongs to the dCTP deaminase family. Homotrimer.

The enzyme catalyses dCTP + H2O + H(+) = dUTP + NH4(+). Its pathway is pyrimidine metabolism; dUMP biosynthesis; dUMP from dCTP (dUTP route): step 1/2. Functionally, catalyzes the deamination of dCTP to dUTP. The chain is dCTP deaminase from Coxiella burnetii (strain CbuK_Q154) (Coxiella burnetii (strain Q154)).